We begin with the raw amino-acid sequence, 269 residues long: Zinc transporter ZupT (269 aa).

8 helical membrane-spanning segments follow: residues 12 to 32 (AFSI…LVMF), 41 to 61 (LSFG…TEIF), 75 to 95 (DHAF…IALI), 126 to 146 (MMAA…TFFA), 152 to 172 (AVGM…GISI), 187 to 207 (VWAC…GYLV), 211 to 231 (FLSP…MVFL), and 249 to 269 (TVYG…LFHF). Residues Asn-136 and Glu-139 each contribute to the Fe(2+) site. Residues Glu-139 and His-164 each contribute to the Zn(2+) site. Residues Asn-165, Glu-168, and Glu-197 each coordinate Fe(2+). Glu-168 provides a ligand contact to Zn(2+).

Belongs to the ZIP transporter (TC 2.A.5) family. ZupT subfamily.

Its subcellular location is the cell inner membrane. It catalyses the reaction Zn(2+)(in) = Zn(2+)(out). Mediates zinc uptake. May also transport other divalent cations. The sequence is that of Zinc transporter ZupT from Neisseria meningitidis serogroup B (strain ATCC BAA-335 / MC58).